Here is a 395-residue protein sequence, read N- to C-terminus: Nicotinamide/nicotinic acid mononucleotide adenylyltransferase 2 (395 aa).

Disordered stretches follow at residues 1–34 and 62–102; these read MDPTKAPDFKPPQPNEELQPPPDPTHTIPKSGPI and KKNA…NGID. Pro residues predominate over residues 9–24; that stretch reads FKPPQPNEELQPPPDP. Residues Ser-85, Ser-89, and Ser-90 each carry the phosphoserine modification. Residues Ser-167 and Phe-168 each coordinate NAD(+). ATP-binding residues include His-175 and Arg-209. NAD(+) contacts are provided by Thr-247, Gly-282, Asp-284, Trp-295, Arg-314, and Asn-345. 350–353 contacts ATP; the sequence is TKVR.

It belongs to the eukaryotic NMN adenylyltransferase family. It depends on Co(2+) as a cofactor.

It is found in the nucleus. The catalysed reaction is beta-nicotinamide D-ribonucleotide + ATP + H(+) = diphosphate + NAD(+). The enzyme catalyses nicotinate beta-D-ribonucleotide + ATP + H(+) = deamido-NAD(+) + diphosphate. It participates in cofactor biosynthesis; NAD(+) biosynthesis; deamido-NAD(+) from nicotinate D-ribonucleotide: step 1/1. It functions in the pathway cofactor biosynthesis; NAD(+) biosynthesis; NAD(+) from nicotinamide D-ribonucleotide: step 1/1. Its function is as follows. Catalyzes the formation of NAD(+) from nicotinamide mononucleotide (NMN) and ATP. Can also use the deamidated form; nicotinic acid mononucleotide (NaMN) as substrate to form deamido-NAD(+) (NaAD). Key enzyme in both de novo and salvage pathways for NAD(+) biosynthesis. Predominantly acts in the salvage pathways via NMN. This is Nicotinamide/nicotinic acid mononucleotide adenylyltransferase 2 from Saccharomyces cerevisiae (strain ATCC 204508 / S288c) (Baker's yeast).